The sequence spans 251 residues: UstYa family oxidase phomYb (251 aa).

The tract at residues Met1–Pro47 is disordered. Residues Ala58–Val78 form a helical membrane-spanning segment. N-linked (GlcNAc...) asparagine glycosylation occurs at Asn135. 2 consecutive short sequence motifs (HXXHC) follow at residues His160–Cys164 and His187–Cys191.

It belongs to the ustYa family.

It localises to the membrane. The protein operates within mycotoxin biosynthesis. Functionally, ustYa family oxidase; part of the gene cluster that mediates the biosynthesis of the phomopsins, a group of hexapeptide mycotoxins which infects lupins and causes lupinosis disease in livestock. Within the pathway, phomYb is probably involved in the construction of the macrocyclic structure of the phomopsins. The pathway starts with the processing of the precursor phomA by several endopeptidases including kexin proteases as well as the cluster-specific S41 family peptidase phomP1 and the oligopeptidase phomG to produce 10 identical copies of the hexapeptide Tyr-Val-Ile-Pro-Ile-Asp. After being excised from the precursor peptide, the core peptides are cyclized and modified post-translationally by enzymes encoded within the gene cluster. The timing and order of proteolysis of the phomA precursor and PTMs are still unknown. Two tyrosinase-like enzymes, phomQ1 and phomQ2, catalyze the chlorination and hydroxylation of Tyr, respectively. PhomYb, is proposed to be involved in the construction of the macrocyclic structure. The other 4 ustYa family proteins may be involved in PTMs that generate the unique structure of phomopsin A. PhomYa is required for the hydroxylation of C-beta of Tyr. PhomYc, phomYd, and phomYe are responsible for the biosynthesis of 2,3-dehydroisoleucine (dIle), 2,3-dehydroaspartic acid (dAsp), and 3,4-dehydroproline (dPro), respectively. While dIle formation by phomYc is indispensable for the installation of dAsp by phomYd, the order of the other PTMs have not been elucidated yet. Most of the biosynthetic enzymes likely have broad substrate specificity, and thus, there might be a metabolic grid from a precursor to phomopsin A. The enzyme(s) responsible for the biosynthesis of 3,4-dehydrovaline (dVal) have also not been identified yet. Finally, phomM acts as an S-adenosylmethionine-dependent alpha-N-methyltransferase that catalyzes two successive N-methylation reactions, converting N-desmethyl-phomopsin A to phomopsin A and phomopsin A further to an N,N-dimethylated congener called phomopsin E. This is UstYa family oxidase phomYb from Diaporthe leptostromiformis (Lupinosis disease fungus).